A 239-amino-acid polypeptide reads, in one-letter code: Geranylgeranylglyceryl phosphate synthase (239 aa).

Aspartate 18 and serine 45 together coordinate Mg(2+). Sn-glycerol 1-phosphate is bound by residues 166 to 172, 197 to 198, and 219 to 220; these read YLEAGSG, GG, and GT.

The protein belongs to the GGGP/HepGP synthase family. Group II subfamily. The cofactor is Mg(2+).

The protein localises to the cytoplasm. The catalysed reaction is sn-glycerol 1-phosphate + (2E,6E,10E)-geranylgeranyl diphosphate = sn-3-O-(geranylgeranyl)glycerol 1-phosphate + diphosphate. The protein operates within membrane lipid metabolism; glycerophospholipid metabolism. In terms of biological role, prenyltransferase that catalyzes the transfer of the geranylgeranyl moiety of geranylgeranyl diphosphate (GGPP) to the C3 hydroxyl of sn-glycerol-1-phosphate (G1P). This reaction is the first ether-bond-formation step in the biosynthesis of archaeal membrane lipids. The protein is Geranylgeranylglyceryl phosphate synthase of Pyrobaculum arsenaticum (strain DSM 13514 / JCM 11321 / PZ6).